Consider the following 89-residue polypeptide: DNA/RNA-binding protein Alba 2 (89 aa).

Residue Lys-12 is modified to N6-acetyllysine.

Belongs to the histone-like Alba family. Acetylated. Acetylation at Lys-12 decreases DNA-binding affinity.

The protein resides in the cytoplasm. Its subcellular location is the chromosome. Its function is as follows. Binds double-stranded DNA tightly but without sequence specificity. Involved in DNA compaction. In Saccharolobus shibatae (strain ATCC 51178 / DSM 5389 / JCM 8931 / NBRC 15437 / B12) (Sulfolobus shibatae), this protein is DNA/RNA-binding protein Alba 2.